The primary structure comprises 368 residues: Chorismate synthase (368 aa).

Arg46 is an NADP(+) binding site. Residues 123-125, 240-241, Gly285, 300-304, and Arg326 each bind FMN; these read RSS, NA, and KPTPT.

It belongs to the chorismate synthase family. Homotetramer. FMNH2 serves as cofactor.

The catalysed reaction is 5-O-(1-carboxyvinyl)-3-phosphoshikimate = chorismate + phosphate. It participates in metabolic intermediate biosynthesis; chorismate biosynthesis; chorismate from D-erythrose 4-phosphate and phosphoenolpyruvate: step 7/7. In terms of biological role, catalyzes the anti-1,4-elimination of the C-3 phosphate and the C-6 proR hydrogen from 5-enolpyruvylshikimate-3-phosphate (EPSP) to yield chorismate, which is the branch point compound that serves as the starting substrate for the three terminal pathways of aromatic amino acid biosynthesis. This reaction introduces a second double bond into the aromatic ring system. The protein is Chorismate synthase of Porphyromonas gingivalis (strain ATCC BAA-308 / W83).